The following is a 431-amino-acid chain: Phosphoribosylamine--glycine ligase (431 aa).

One can recognise an ATP-grasp domain in the interval 108-315; the sequence is KDFLARHEIP…LVLLVEAAFA (208 aa). 134 to 195 provides a ligand contact to ATP; sequence LQEKGAPIVI…EEFLDGEEAS (62 aa). Mg(2+)-binding residues include E285 and N287.

This sequence belongs to the GARS family. Mg(2+) serves as cofactor. Mn(2+) is required as a cofactor.

It catalyses the reaction 5-phospho-beta-D-ribosylamine + glycine + ATP = N(1)-(5-phospho-beta-D-ribosyl)glycinamide + ADP + phosphate + H(+). It functions in the pathway purine metabolism; IMP biosynthesis via de novo pathway; N(1)-(5-phospho-D-ribosyl)glycinamide from 5-phospho-alpha-D-ribose 1-diphosphate: step 2/2. The protein is Phosphoribosylamine--glycine ligase of Pseudomonas putida (strain ATCC 47054 / DSM 6125 / CFBP 8728 / NCIMB 11950 / KT2440).